The sequence spans 250 residues: UPF0736 protein YjbA (250 aa).

The protein belongs to the UPF0736 family.

The sequence is that of UPF0736 protein YjbA (yjbA) from Bacillus subtilis (strain 168).